The chain runs to 418 residues: Protein-lysine 6-oxidase (418 aa).

Residues 1–20 form the signal peptide; that stretch reads MRFAWTALLGSLQLCALVRC. A propeptide spans 21-169 (removed by BMP1); that stretch reads APPAASHRQP…NRVEVDGMVG (149 aa). The tract at residues 63–84 is disordered; sequence YQPQRRRDPGATAPGAANATAP. Residues 72–84 show a composition bias toward low complexity; it reads GATAPGAANATAP. 3 N-linked (GlcNAc...) asparagine glycosylation sites follow: Asn80, Asn96, and Asn143. Residues 130–175 are disordered; the sequence is TSGAHDAGTSRADNQTAPGEVPTLSNLRPPNRVEVDGMVGDDPYNP. A compositionally biased stretch (polar residues) spans 140–157; that stretch reads RADNQTAPGEVPTLSNLR. Sulfotyrosine is present on Tyr188. The tract at residues 214–418 is lysyl-oxidase like; the sequence is PDLVPDPYYI…YASGCTISPY (205 aa). Intrachain disulfides connect Cys239/Cys245, Cys292/Cys341, Cys325/Cys331, Cys352/Cys362, and Cys399/Cys413. The Cu cation site is built by His293, His295, and His297. The segment at residues 321 to 356 is a cross-link (lysine tyrosylquinone (Lys-Tyr)); the sequence is KASFCLEDTSCDYGYHRRFACTAHTQGLSPGCYDTY. Tyr356 bears the 2',4',5'-topaquinone mark.

Belongs to the lysyl oxidase family. Interacts with MFAP4. Interacts (via propeptide) with EFEMP2; this interaction is strong and facilitates formation of ternary complexes with ELN during elastic fiber assembly; this interaction limits interaction of EFEMP2 with FBLN5. It depends on Cu cation as a cofactor. Lysine tyrosylquinone residue serves as cofactor. In terms of processing, the lysine tyrosylquinone cross-link (LTQ) is generated by condensation of the epsilon-amino group of a lysine with a topaquinone produced by oxidation of tyrosine. Proteolytically cleaved by BMP1 which removes the propeptide. Also proteolytically cleaved by ADAMTS2 and ADAMTS14, but not by ADAMTS3, at an additional cleavage site downstream of the BMP1 cleavage site. The propeptide plays a role in directing the deposition of this enzyme to elastic fibers, via interaction with tropoelastin. Cleavage by BMP1 to remove the propeptide does not increase enzymatic activity but increases binding to collagen. Cleavage by ADAMTS2 produces a form with reduced collagen-binding activity. Post-translationally, sulfated at Tyr-188 and also at either Tyr-184 or Tyr-185 which enhances binding to collagen.

The protein localises to the secreted. Its subcellular location is the extracellular space. The enzyme catalyses L-lysyl-[protein] + O2 + H2O = (S)-2-amino-6-oxohexanoyl-[protein] + H2O2 + NH4(+). Responsible for the post-translational oxidative deamination of peptidyl lysine residues in precursors to fibrous collagen and elastin. Regulator of Ras expression. May play a role in tumor suppression. Plays a role in the aortic wall architecture. This chain is Protein-lysine 6-oxidase, found in Bos taurus (Bovine).